We begin with the raw amino-acid sequence, 442 residues long: Coiled-coil domain-containing protein 112 (442 aa).

2 coiled-coil regions span residues 23–116 (LEEL…RRIE) and 217–249 (LEEK…VDTV). 3 disordered regions span residues 245-272 (KVDT…KKQK), 289-312 (KLAS…QRQS), and 392-442 (EKVE…RQGI). 2 stretches are compositionally biased toward basic and acidic residues: residues 256–268 (KAED…EEQR) and 294–310 (LREE…ERQR). A coiled-coil region spans residues 281-400 (RKSLEMSAKL…KEKVENNVSR (120 aa)).

It localises to the cytoplasm. It is found in the cytoskeleton. The protein localises to the microtubule organizing center. Its subcellular location is the centrosome. The protein resides in the centriolar satellite. The sequence is that of Coiled-coil domain-containing protein 112 (Ccdc112) from Mus musculus (Mouse).